Here is a 414-residue protein sequence, read N- to C-terminus: L-cysteine:1D-myo-inositol 2-amino-2-deoxy-alpha-D-glucopyranoside ligase (414 aa).

Cysteine 44 lines the Zn(2+) pocket. Residues 44 to 47 (CGIT), threonine 59, and 82 to 84 (NIT) each bind L-cysteinyl-5'-AMP. The 'HIGH' region motif lies at 46-56 (ITPYDSTHLGH). Residues 188 to 193 (ERGGDP) carry the 'ERGGDP' region motif. Tryptophan 228 contributes to the L-cysteinyl-5'-AMP binding site. Cysteine 232 is a binding site for Zn(2+). 250–252 (GSD) provides a ligand contact to L-cysteinyl-5'-AMP. Histidine 257 is a binding site for Zn(2+). Residue isoleucine 284 participates in L-cysteinyl-5'-AMP binding. A 'KMSKS' region motif is present at residues 290–294 (KMSKS).

Belongs to the class-I aminoacyl-tRNA synthetase family. MshC subfamily. Monomer. Requires Zn(2+) as cofactor.

The enzyme catalyses 1D-myo-inositol 2-amino-2-deoxy-alpha-D-glucopyranoside + L-cysteine + ATP = 1D-myo-inositol 2-(L-cysteinylamino)-2-deoxy-alpha-D-glucopyranoside + AMP + diphosphate + H(+). Functionally, catalyzes the ATP-dependent condensation of GlcN-Ins and L-cysteine to form L-Cys-GlcN-Ins. The protein is L-cysteine:1D-myo-inositol 2-amino-2-deoxy-alpha-D-glucopyranoside ligase of Corynebacterium aurimucosum (strain ATCC 700975 / DSM 44827 / CIP 107346 / CN-1) (Corynebacterium nigricans).